The sequence spans 219 residues: Sugar fermentation stimulation protein homolog (219 aa).

It belongs to the SfsA family.

This chain is Sugar fermentation stimulation protein homolog, found in Archaeoglobus fulgidus (strain ATCC 49558 / DSM 4304 / JCM 9628 / NBRC 100126 / VC-16).